A 94-amino-acid polypeptide reads, in one-letter code: U1-theraphotoxin-Sp1a (94 aa).

Positions 1–22 (MIFLLPSIISVMLLAEPVLMLG) are cleaved as a signal peptide. Residues 23-58 (DTEDADLMEMVQLSRPFFNPIIRAVELVELREERQR) constitute a propeptide that is removed on maturation. Intrachain disulfides connect Cys-60–Cys-78, Cys-67–Cys-83, and Cys-77–Cys-88. Val-92 carries the valine amide modification.

This sequence belongs to the neurotoxin 14 (magi-1) family. OAIP-1 subfamily. Expressed by the venom gland.

The protein localises to the secreted. Its function is as follows. Probable ion channel inhibitor. Shows insecticidal activity. Acts synergistically with the neonicotinoid insecticide imidacloprid. Is neither a repellent that repels insects nor an attractant that is preferentially consumed by insects. Is very stable. This is U1-theraphotoxin-Sp1a from Selenotypus plumipes (Australian featherleg tarantula).